The primary structure comprises 336 residues: Dihydroorotate dehydrogenase (quinone) (336 aa).

FMN is bound by residues Ala62 to Lys66 and Thr86. Lys66 serves as a coordination point for substrate. Residue Asn111–Phe115 participates in substrate binding. FMN contacts are provided by Asn139 and Asn172. Asn172 serves as a coordination point for substrate. Ser175 functions as the Nucleophile in the catalytic mechanism. Residue Asn177 participates in substrate binding. FMN-binding residues include Lys217 and Thr245. Residue Asn246–Thr247 participates in substrate binding. FMN is bound by residues Gly268, Gly297, and Tyr318–Ser319.

Belongs to the dihydroorotate dehydrogenase family. Type 2 subfamily. Monomer. FMN serves as cofactor.

It localises to the cell membrane. It catalyses the reaction (S)-dihydroorotate + a quinone = orotate + a quinol. Its pathway is pyrimidine metabolism; UMP biosynthesis via de novo pathway; orotate from (S)-dihydroorotate (quinone route): step 1/1. Functionally, catalyzes the conversion of dihydroorotate to orotate with quinone as electron acceptor. The chain is Dihydroorotate dehydrogenase (quinone) from Salmonella agona (strain SL483).